Reading from the N-terminus, the 129-residue chain is Photosystem II extrinsic protein V (129 aa).

4 residues coordinate heme c: cysteine 35, cysteine 38, histidine 39, and histidine 90.

It belongs to the cytochrome c family. PsbV subfamily. In terms of assembly, PSII is composed of 1 copy each of membrane proteins PsbA, PsbB, PsbC, PsbD, PsbE, PsbF, PsbH, PsbI, PsbJ, PsbK, PsbL, PsbM, PsbT, PsbX, PsbY, PsbZ, Psb30/Ycf12, peripheral proteins PsbO, CyanoQ (PsbQ), PsbU, PsbV and a large number of cofactors. It forms dimeric complexes. Homodimer in crystal structure. Requires heme c as cofactor.

Its subcellular location is the cellular thylakoid membrane. Its function is as follows. One of the extrinsic, lumenal subunits of photosystem II (PSII). PSII is a light-driven water plastoquinone oxidoreductase, using light energy to abstract electrons from H(2)O, generating a proton gradient subsequently used for ATP formation. The extrinsic proteins stabilize the structure of photosystem II oxygen-evolving complex (OEC), the ion environment of oxygen evolution and protect the OEC against heat-induced inactivation. Low-potential cytochrome c that plays a role in the OEC of PSII. The polypeptide is Photosystem II extrinsic protein V (Limnospira maxima (Arthrospira maxima)).